The primary structure comprises 301 residues: Cytosolic sulfotransferase 3 (301 aa).

Residue 53–58 participates in 3'-phosphoadenylyl sulfate binding; the sequence is KAGTTW. Residue H115 is the Proton acceptor of the active site. 3'-phosphoadenylyl sulfate is bound by residues R137, S145, Y201, 235–240, and 263–265; these read VQFDAM and RKG.

Belongs to the sulfotransferase 1 family.

It localises to the cytoplasm. Its activity is regulated as follows. Inhibited by Hg(2+), Co(2+), Zn(2+), Cd(2+), Cu(2+) and Pb(2+) ions. Activated slightly by Mn(2+), Ca(2+) and Mg(2+) ions. Functionally, sulfotransferase that utilizes 3'-phospho-5'-adenylyl sulfate (PAPS) as sulfonate donor to catalyze the sulfate conjugation of a variety of xenobiotic and endogenous compounds, including dopamine, T3 (triiodo-L-thyronine), T4 (thyroxine), estrone, DHEA (dehydroepiandrosterone), flavonoids, isoflavonoids and other phenolic compounds. The sequence is that of Cytosolic sulfotransferase 3 from Danio rerio (Zebrafish).